A 530-amino-acid chain; its full sequence is UDP-N-acetylmuramoyl-L-alanyl-D-glutamate--2,6-diaminopimelate ligase (530 aa).

Residue S21 participates in UDP-N-acetyl-alpha-D-muramoyl-L-alanyl-D-glutamate binding. 99-105 serves as a coordination point for ATP; that stretch reads GTNGKSS. Residues 145-146, S172, Q178, and R180 contribute to the UDP-N-acetyl-alpha-D-muramoyl-L-alanyl-D-glutamate site; that span reads TT. N6-carboxylysine is present on K212. Residues 221 to 269 enclose the RPE1 insert domain; that stretch reads FKPAYREEFKGDTEHSTTAYILVREDASTGSTSKLLLEAKFGKMSTEYL. Meso-2,6-diaminopimelate is bound by residues R422, 446 to 449, G496, and E500; that span reads DNPR. The short motif at 446 to 449 is the Meso-diaminopimelate recognition motif element; that stretch reads DNPR.

This sequence belongs to the MurCDEF family. MurE subfamily. Requires Mg(2+) as cofactor. Post-translationally, carboxylation is probably crucial for Mg(2+) binding and, consequently, for the gamma-phosphate positioning of ATP.

Its subcellular location is the cytoplasm. The enzyme catalyses UDP-N-acetyl-alpha-D-muramoyl-L-alanyl-D-glutamate + meso-2,6-diaminopimelate + ATP = UDP-N-acetyl-alpha-D-muramoyl-L-alanyl-gamma-D-glutamyl-meso-2,6-diaminopimelate + ADP + phosphate + H(+). Its pathway is cell wall biogenesis; peptidoglycan biosynthesis. Its function is as follows. Catalyzes the addition of meso-diaminopimelic acid to the nucleotide precursor UDP-N-acetylmuramoyl-L-alanyl-D-glutamate (UMAG) in the biosynthesis of bacterial cell-wall peptidoglycan. This is UDP-N-acetylmuramoyl-L-alanyl-D-glutamate--2,6-diaminopimelate ligase from Rickettsia felis (strain ATCC VR-1525 / URRWXCal2) (Rickettsia azadi).